The primary structure comprises 45 residues: Bacteriocin fulvocin-C (45 aa).

In terms of biological role, bacteriocin. The protein is Bacteriocin fulvocin-C of Myxococcus fulvus.